The chain runs to 433 residues: Cyclin-dependent kinase F-3 (433 aa).

The Protein kinase domain maps to 4–283 (YKVIREIGDG…AEQSLQHPFF (280 aa)). ATP is bound by residues 10 to 18 (IGDGTCGNV) and lysine 33. The active-site Proton acceptor is the aspartate 125. Serine 151 bears the Phosphoserine mark. Threonine 156 is modified (phosphothreonine).

It belongs to the protein kinase superfamily. CMGC Ser/Thr protein kinase family. CDC2/CDKX subfamily.

The catalysed reaction is L-seryl-[protein] + ATP = O-phospho-L-seryl-[protein] + ADP + H(+). The enzyme catalyses L-threonyl-[protein] + ATP = O-phospho-L-threonyl-[protein] + ADP + H(+). It catalyses the reaction [DNA-directed RNA polymerase] + ATP = phospho-[DNA-directed RNA polymerase] + ADP + H(+). In Oryza sativa subsp. japonica (Rice), this protein is Cyclin-dependent kinase F-3 (CDKF-3).